The sequence spans 228 residues: L-ribulose-5-phosphate 4-epimerase UlaF (228 aa).

Substrate-binding positions include 26–27, 43–44, and 72–73; these read GN, SG, and SS. Positions 74, 93, and 95 each coordinate Zn(2+). D118 acts as the Proton donor/acceptor in catalysis. H167 contacts Zn(2+). Catalysis depends on Y225, which acts as the Proton donor/acceptor.

It belongs to the aldolase class II family. AraD/FucA subfamily. Zn(2+) serves as cofactor.

The enzyme catalyses L-ribulose 5-phosphate = D-xylulose 5-phosphate. The protein operates within cofactor degradation; L-ascorbate degradation; D-xylulose 5-phosphate from L-ascorbate: step 4/4. Its function is as follows. Catalyzes the isomerization of L-ribulose 5-phosphate to D-xylulose 5-phosphate. Is involved in the anaerobic L-ascorbate utilization. This is L-ribulose-5-phosphate 4-epimerase UlaF from Escherichia coli (strain ATCC 8739 / DSM 1576 / NBRC 3972 / NCIMB 8545 / WDCM 00012 / Crooks).